The sequence spans 547 residues: G protein-coupled receptor associated sorting protein 3 (547 aa).

Residues 1 to 10 (MAGTKNKTRA) are compositionally biased toward basic residues. Disordered regions lie at residues 1 to 32 (MAGT…EATG) and 80 to 102 (TLGK…STCK).

Belongs to the GPRASP family. Homodimer. In terms of tissue distribution, highly expressed in brain. Not expressed in lung or liver. Down-regulated in brain from patients suffering from Alzheimer disease.

Its subcellular location is the cytoplasm. It is found in the nucleus. Survival and differentiation promoting protein that plays a role in the regulation of neurosynaptogenesis. Induces phosphatase PP2A activity which results in APP dephosphorylation and inhibits BACE1-mediated processing of APP. The sequence is that of G protein-coupled receptor associated sorting protein 3 from Homo sapiens (Human).